Consider the following 451-residue polypeptide: UDP-N-acetylmuramoylalanine--D-glutamate ligase (451 aa).

118-124 (GTKGKST) is an ATP binding site.

This sequence belongs to the MurCDEF family.

It localises to the cytoplasm. It carries out the reaction UDP-N-acetyl-alpha-D-muramoyl-L-alanine + D-glutamate + ATP = UDP-N-acetyl-alpha-D-muramoyl-L-alanyl-D-glutamate + ADP + phosphate + H(+). It participates in cell wall biogenesis; peptidoglycan biosynthesis. In terms of biological role, cell wall formation. Catalyzes the addition of glutamate to the nucleotide precursor UDP-N-acetylmuramoyl-L-alanine (UMA). The chain is UDP-N-acetylmuramoylalanine--D-glutamate ligase from Borreliella burgdorferi (strain ZS7) (Borrelia burgdorferi).